Here is a 178-residue protein sequence, read N- to C-terminus: Interleukin-10 (178 aa).

A signal peptide spans 1–18 (MHSSALLCCLVLLTGVRA). Disulfide bonds link Cys-30–Cys-126 and Cys-80–Cys-132. Residue Asn-134 is glycosylated (N-linked (GlcNAc...) asparagine).

The protein belongs to the IL-10 family. In terms of assembly, homodimer. Interacts with IL10RA and IL10RB.

The protein resides in the secreted. Functionally, major immune regulatory cytokine that acts on many cells of the immune system where it has profound anti-inflammatory functions, limiting excessive tissue disruption caused by inflammation. Mechanistically, IL10 binds to its heterotetrameric receptor comprising IL10RA and IL10RB leading to JAK1 and STAT2-mediated phosphorylation of STAT3. In turn, STAT3 translocates to the nucleus where it drives expression of anti-inflammatory mediators. Targets antigen-presenting cells (APCs) such as macrophages and monocytes and inhibits their release of pro-inflammatory cytokines including granulocyte-macrophage colony-stimulating factor /GM-CSF, granulocyte colony-stimulating factor/G-CSF, IL-1 alpha, IL-1 beta, IL-6, IL-8 and TNF-alpha. Also interferes with antigen presentation by reducing the expression of MHC-class II and co-stimulatory molecules, thereby inhibiting their ability to induce T cell activation. In addition, controls the inflammatory response of macrophages by reprogramming essential metabolic pathways including mTOR signaling. This Cercocebus atys (Sooty mangabey) protein is Interleukin-10 (IL10).